A 297-amino-acid polypeptide reads, in one-letter code: HTH-type transcriptional regulator AceR (297 aa).

The HTH lysR-type domain maps to 1 to 60 (MNINQEQLLMFQAVMETGSFSAAARKLGKVPSAVSMSIANLEIDLNLTLFERKGREPTPT). The segment at residues 20–39 (FSAAARKLGKVPSAVSMSIA) is a DNA-binding region (H-T-H motif).

The protein belongs to the LysR transcriptional regulatory family. As to quaternary structure, homodimer and homotetramer. Binding of chlorhexidine at the inducer-binding domain causes a quaternary structural change that favors interactions between dimers to form tetramers.

The protein localises to the cytoplasm. In terms of biological role, regulates the expression of the AceI transporter. Binds DNA and chlorhexidine. Binds to regulatory sites within the intergenic region between the aceI and aceR genes, and affects the interaction between RNA polymerase (RNAP) and promoter DNA both in the presence and in the absence of chlorhexidine. In the absence of chlorhexidine, prevents transcription of the aceI gene by disrupting interactions between the promoter DNA and RNAP. In the presence of chlorhexidine, activates expression of aceI. When AceR interacts with chlorhexidine, it undergoes a conformational change and the tetrameric form either releases the DNA or shifts the position of the DNA-binding region to allow RNAP to bind onto the promoter DNA to proceed with aceI transcription. In Acinetobacter baumannii (strain ATCC 17978 / DSM 105126 / CIP 53.77 / LMG 1025 / NCDC KC755 / 5377), this protein is HTH-type transcriptional regulator AceR.